The following is a 167-amino-acid chain: Small ribosomal subunit protein uS3m (167 aa).

Residues 1–35 (MAWSASVRGLGQRVLACSRELPGAWRTLHTSAVCA) constitute a mitochondrion transit peptide.

It belongs to the universal ribosomal protein uS3 family. Component of the mitochondrial ribosome small subunit (28S) which comprises a 12S rRNA and about 30 distinct proteins.

It localises to the mitochondrion. This is Small ribosomal subunit protein uS3m (Mrps24) from Mus musculus (Mouse).